Reading from the N-terminus, the 244-residue chain is U11/U12 small nuclear ribonucleoprotein 35 kDa protein (244 aa).

The region spanning 51–129 is the RRM domain; sequence LTLFVARLNL…HEIFVDYELE (79 aa). The segment covering 146-162 has biased composition (basic and acidic residues); it reads GKKESGQLRFGGRDRPF. Residues 146–244 are disordered; it reads GKKESGQLRF…KSRDKRDRSK (99 aa). Lys-172 is covalently cross-linked (Glycyl lysine isopeptide (Lys-Gly) (interchain with G-Cter in SUMO2)). Basic and acidic residues-rich tracts occupy residues 173–185 and 192–244; these read NEPH…ERRE and RHWD…DRSK.

In terms of assembly, component of the U11/U12 snRNPs that are part of the U12-type spliceosome.

Its subcellular location is the nucleus. This Mus musculus (Mouse) protein is U11/U12 small nuclear ribonucleoprotein 35 kDa protein (Snrnp35).